Here is a 796-residue protein sequence, read N- to C-terminus: Protein translocase subunit SecA 2 (796 aa).

ATP is bound by residues Gln-84, 102–106 (GEGKT), and Asp-496.

The protein belongs to the SecA family. In terms of assembly, monomer and homodimer. Part of the essential Sec protein translocation apparatus which comprises SecA, SecYEG and auxiliary proteins SecDF. Other proteins may also be involved.

The protein resides in the cell membrane. It localises to the cytoplasm. The catalysed reaction is ATP + H2O + cellular proteinSide 1 = ADP + phosphate + cellular proteinSide 2.. Its function is as follows. Part of the Sec protein translocase complex. Interacts with the SecYEG preprotein conducting channel. Has a central role in coupling the hydrolysis of ATP to the transfer of proteins into and across the cell membrane, serving as an ATP-driven molecular motor driving the stepwise translocation of polypeptide chains across the membrane. In Staphylococcus aureus (strain Mu3 / ATCC 700698), this protein is Protein translocase subunit SecA 2.